The sequence spans 610 residues: DNA mismatch repair protein MutL (610 aa).

The protein belongs to the DNA mismatch repair MutL/HexB family.

Functionally, this protein is involved in the repair of mismatches in DNA. It is required for dam-dependent methyl-directed DNA mismatch repair. May act as a 'molecular matchmaker', a protein that promotes the formation of a stable complex between two or more DNA-binding proteins in an ATP-dependent manner without itself being part of a final effector complex. The chain is DNA mismatch repair protein MutL from Rickettsia rickettsii (strain Sheila Smith).